Reading from the N-terminus, the 1125-residue chain is RGS domain-containing serine/threonine-protein kinase A (1125 aa).

4 disordered regions span residues 1–77, 96–191, 276–416, and 455–480; these read MKTS…GGNK, RRNS…IVDD, GISP…NNTN, and YVGG…PAPE. Low complexity-rich tracts occupy residues 7-30 and 37-66; these read SSNS…NNNN and SSKS…LSSG. A compositionally biased stretch (basic and acidic residues) spans 121 to 136; sequence LDSKPPKPFDEKDDPI. Composition is skewed to low complexity over residues 159-191 and 281-342; these read QPQQ…IVDD and NNNN…LNNS. Residues 343 to 361 show a composition bias toward polar residues; the sequence is PRYLNSSSSPRSMQHLSSK. Residues 362–416 show a composition bias toward low complexity; the sequence is ITTTTTTTTTTTTTTSDDNNGNTNNNISNNNNIINNSNNNSNSNNNNNNNINNTN. One can recognise an RGS domain in the interval 487–603; sequence KFIETITDPT…ISSPFNPEWK (117 aa). A compositionally biased stretch (low complexity) spans 617 to 685; sequence TTTQPINNFN…NNSNGSNTSS (69 aa). Disordered regions lie at residues 617 to 710 and 723 to 762; these read TTTQ…KERS and NLSN…SNNN. Residues 690–710 are compositionally biased toward basic and acidic residues; that stretch reads ERLDNIKGNRERVDSNGKERS. The span at 723 to 735 shows a compositional bias: low complexity; sequence NLSNHSNSSSNSN. Residues 736–748 show a composition bias toward basic and acidic residues; that stretch reads GKDKDKDKDKNEN. Residues 749–762 are compositionally biased toward low complexity; sequence TTDNSNNNNNSNNN. The 256-residue stretch at 842–1097 folds into the Protein kinase domain; it reads VSIHKWIASG…YLESIIYPSV (256 aa). ATP is bound by residues 848-856 and Lys869; that span reads IASGSSGRV. Residue Asp963 is the Proton acceptor of the active site.

The protein belongs to the protein kinase superfamily. TKL Ser/Thr protein kinase family. In terms of processing, autophosphorylated.

It is found in the cytoplasm. Its subcellular location is the cell membrane. The catalysed reaction is L-seryl-[protein] + ATP = O-phospho-L-seryl-[protein] + ADP + H(+). It carries out the reaction L-threonyl-[protein] + ATP = O-phospho-L-threonyl-[protein] + ADP + H(+). Its activity is regulated as follows. Up-regulated by cAMP. Serine/threonine kinase involved in negative regulation of chemotaxis. This Dictyostelium discoideum (Social amoeba) protein is RGS domain-containing serine/threonine-protein kinase A (rckA).